Here is a 349-residue protein sequence, read N- to C-terminus: Heparin sulfate O-sulfotransferase (349 aa).

Residues 1–17 lie on the Cytoplasmic side of the membrane; that stretch reads MFRKLLKMWILLRPTHW. Residues 18 to 38 traverse the membrane as a helical; Signal-anchor for type II membrane protein segment; sequence LILIALCAVTCAGYWLLWSEI. Residues 39–349 are Lumenal-facing; it reads RLEHAFKPLS…KFMYEKIRPK (311 aa). Asparagine 107 and asparagine 126 each carry an N-linked (GlcNAc...) asparagine glycan. Active-site residues include histidine 139 and histidine 141. 2 disulfide bridges follow: cysteine 200–cysteine 208 and cysteine 221–cysteine 227. Asparagine 282 carries N-linked (GlcNAc...) asparagine glycosylation.

Belongs to the sulfotransferase 3 family. Homotrimer.

The protein resides in the golgi apparatus membrane. Catalyzes the transfer of sulfate to the C2-position of selected hexuronic acid residues within the maturing heparan sulfate (HS). The chain is Heparin sulfate O-sulfotransferase from Drosophila melanogaster (Fruit fly).